Reading from the N-terminus, the 140-residue chain is Translation initiation factor 2 subunit beta (140 aa).

Belongs to the eIF-2-beta/eIF-5 family. As to quaternary structure, heterotrimer composed of an alpha, a beta and a gamma chain.

In terms of biological role, eIF-2 functions in the early steps of protein synthesis by forming a ternary complex with GTP and initiator tRNA. The chain is Translation initiation factor 2 subunit beta (eif2b) from Pyrococcus horikoshii (strain ATCC 700860 / DSM 12428 / JCM 9974 / NBRC 100139 / OT-3).